A 201-amino-acid polypeptide reads, in one-letter code: Probable DNA replication complex GINS protein PSF1 (201 aa).

Belongs to the GINS1/PSF1 family. In terms of assembly, component of the GINS complex which is a heterotetramer of gins1, gins2, gins3 and gins4.

The protein localises to the nucleus. Functionally, the GINS complex plays an essential role in the initiation of DNA replication. In Caenorhabditis briggsae, this protein is Probable DNA replication complex GINS protein PSF1.